The sequence spans 62 residues: Kurtoxin-like I (62 aa).

Residues 2–62 (IDGYPVDNWN…ARIKRGGRCN (61 aa)) form the LCN-type CS-alpha/beta domain. Disulfide bonds link cysteine 12–cysteine 61, cysteine 16–cysteine 37, cysteine 23–cysteine 44, and cysteine 27–cysteine 46.

Expressed by the venom gland.

The protein localises to the secreted. This neurotoxin acts on sodium and calcium channels. Potently inhibits native voltage-gated T-type calcium channel activity in mouse male germ cells and weakly blocks Cav3.3/CACNA1I channels expressed in Xenopus oocytes. In addition, significantly slows the inactivation of activated recombinant sodium channels (Nav1.5/SCN5A). The sequence is that of Kurtoxin-like I from Parabuthus granulatus (Granulated thick-tailed scorpion).